The sequence spans 181 residues: MTDRTDADDLDLQRVGARLAARAQIRDIRLLRTQAAVHRAPKPAQGLTYDLEFEPAVDADPATISAFVVRISCHLRIQNQAADDDVKEGDTKDETQDVATADFEFAALFDYHLQEGEDDPTEEELTAYAATTGRFALYPYIREYVYDLTGRLALPPLTLEILSRPMPVSPGAQWPATRGTP.

At Thr-2 the chain carries N-acetylthreonine.

It belongs to the SecB-like family. Homotetramer, interacts with antitoxin HigA1.

In terms of biological role, chaperone component of an atypical, type II toxin-antitoxin chaperone (TAC) system. Prevents antitoxin HigA1 aggregation in vitro at a 1:3 chaperone:antitoxin ratio, probably also protects antitoxin HigA1 from protease. Required for neutralization of toxin HigB1 upon ectopic expression in Mycobacterium marinum or E.coli. When expressed in E.coli complements a secB deletion, restores export of OmpA and MBP and inhibits aggregation of proOmpC although it is less efficient than endogenous SecB. Complements the general chaperone function of E.coli SecB less well. The chain is SecB-like chaperone Rv1957 (secBL) from Mycobacterium tuberculosis (strain ATCC 25618 / H37Rv).